We begin with the raw amino-acid sequence, 946 residues long: Probable inactive ATP-dependent zinc metalloprotease FTSHI 1, chloroplastic (946 aa).

Residues 1–54 constitute a chloroplast transit peptide; sequence MASIDNVFSLGTRFSIPENPKRSILKHATTSSFSARTQTRWRAPILRRSFTVLC. 3 helical membrane passes run 289–309, 320–340, and 369–389; these read AVIAAAAVVVGGFLASAVFAV, VVWPIAKPFLKLFVGVFLGVL, and VASSLEMLKPILLVVMTMVLL. 470–477 contributes to the ATP binding site; sequence GPPGCGKT.

In the N-terminal section; belongs to the AAA ATPase family. This sequence in the C-terminal section; belongs to the peptidase M41 family. Oligomer.

It is found in the plastid. Its subcellular location is the chloroplast inner membrane. Functions in chloroplast biogenesis and chloroplast division. Required for plastid development during embryogenesis. Might be involved in chaperone functions or play a structural role in the thylakoid FtsH complex. This chain is Probable inactive ATP-dependent zinc metalloprotease FTSHI 1, chloroplastic, found in Arabidopsis thaliana (Mouse-ear cress).